The primary structure comprises 780 residues: LPS-assembly protein LptD (780 aa).

The signal sequence occupies residues 1 to 24 (MKKRFPTLLATLIWTALYSQHTLA).

This sequence belongs to the LptD family. Component of the lipopolysaccharide transport and assembly complex. Interacts with LptE and LptA.

It is found in the cell outer membrane. Functionally, together with LptE, is involved in the assembly of lipopolysaccharide (LPS) at the surface of the outer membrane. This is LPS-assembly protein LptD from Yersinia pestis bv. Antiqua (strain Antiqua).